Here is a 318-residue protein sequence, read N- to C-terminus: Transaldolase (318 aa).

Lys132 acts as the Schiff-base intermediate with substrate in catalysis.

It belongs to the transaldolase family. Type 1 subfamily. Homodimer.

The protein localises to the cytoplasm. The enzyme catalyses D-sedoheptulose 7-phosphate + D-glyceraldehyde 3-phosphate = D-erythrose 4-phosphate + beta-D-fructose 6-phosphate. It functions in the pathway carbohydrate degradation; pentose phosphate pathway; D-glyceraldehyde 3-phosphate and beta-D-fructose 6-phosphate from D-ribose 5-phosphate and D-xylulose 5-phosphate (non-oxidative stage): step 2/3. Its function is as follows. Transaldolase is important for the balance of metabolites in the pentose-phosphate pathway. This is Transaldolase from Shewanella loihica (strain ATCC BAA-1088 / PV-4).